A 238-amino-acid chain; its full sequence is Ribosomal RNA small subunit methyltransferase G (238 aa).

S-adenosyl-L-methionine-binding positions include glycine 77, phenylalanine 82, 128 to 129, and arginine 147; that span reads AE.

This sequence belongs to the methyltransferase superfamily. RNA methyltransferase RsmG family.

It is found in the cytoplasm. Specifically methylates the N7 position of guanine in position 535 of 16S rRNA. This chain is Ribosomal RNA small subunit methyltransferase G, found in Exiguobacterium sp. (strain ATCC BAA-1283 / AT1b).